A 105-amino-acid chain; its full sequence is Small ribosomal subunit protein bS18 (105 aa).

Residues 1-10 (MAEETNQQAP) show a composition bias toward polar residues. Positions 1-34 (MAEETNQQAPESGASSSQPTSRPSGPRGGSGGRK) are disordered. The span at 12–25 (SGASSSQPTSRPSG) shows a compositional bias: low complexity.

This sequence belongs to the bacterial ribosomal protein bS18 family. In terms of assembly, part of the 30S ribosomal subunit. Forms a tight heterodimer with protein bS6.

Binds as a heterodimer with protein bS6 to the central domain of the 16S rRNA, where it helps stabilize the platform of the 30S subunit. The sequence is that of Small ribosomal subunit protein bS18 from Acidobacterium capsulatum (strain ATCC 51196 / DSM 11244 / BCRC 80197 / JCM 7670 / NBRC 15755 / NCIMB 13165 / 161).